Reading from the N-terminus, the 144-residue chain is Transcriptional regulator SlyA (144 aa).

Residues 2-135 (ESPLGSDLAR…LIKLIAKLEH (134 aa)) form the HTH marR-type domain. Positions 49-72 (QIQLAKAIGIEQPSLVRTLDQLEE) form a DNA-binding region, H-T-H motif.

Belongs to the SlyA family. In terms of assembly, homodimer.

Functionally, transcription regulator that can specifically activate or repress expression of target genes. The polypeptide is Transcriptional regulator SlyA (Escherichia coli O127:H6 (strain E2348/69 / EPEC)).